The chain runs to 389 residues: S-adenosylmethionine synthase 3 (389 aa).

Mg(2+) is bound at residue Glu-9. His-15 contributes to the ATP binding site. Glu-43 serves as a coordination point for K(+). Positions 56 and 99 each coordinate L-methionine. ATP is bound by residues 167 to 169 (DGK), 235 to 238 (SGRF), Asp-246, 252 to 253 (RK), Ala-269, Lys-273, and Lys-277. Asp-246 serves as a coordination point for L-methionine. Residue Lys-277 coordinates L-methionine.

It belongs to the AdoMet synthase family. As to quaternary structure, homotetramer. The cofactor is Mn(2+). Requires Mg(2+) as cofactor. Co(2+) serves as cofactor. K(+) is required as a cofactor.

It is found in the cytoplasm. The enzyme catalyses L-methionine + ATP + H2O = S-adenosyl-L-methionine + phosphate + diphosphate. It functions in the pathway amino-acid biosynthesis; S-adenosyl-L-methionine biosynthesis; S-adenosyl-L-methionine from L-methionine: step 1/1. Functionally, catalyzes the formation of S-adenosylmethionine from methionine and ATP. The reaction comprises two steps that are both catalyzed by the same enzyme: formation of S-adenosylmethionine (AdoMet) and triphosphate, and subsequent hydrolysis of the triphosphate. The polypeptide is S-adenosylmethionine synthase 3 (METK3) (Vitis vinifera (Grape)).